We begin with the raw amino-acid sequence, 221 residues long: Adenylate kinase (221 aa).

An ATP-binding site is contributed by 10–15; the sequence is GAGKGT. The tract at residues 30 to 59 is NMP; that stretch reads STGDMLRAAVKARTELGVAAKKIMDAGGLV. AMP contacts are provided by residues threonine 31, arginine 36, 57–59, 85–88, and glutamine 92; these read GLV and GFPR. The segment at 122 to 159 is LID; that stretch reads GRRVHLASGRTYHIKFNPPKVEGKDDITGDPLIQRDDD. Residues arginine 123 and 132-133 contribute to the ATP site; that span reads TY. AMP contacts are provided by arginine 156 and arginine 167. Residue serine 207 coordinates ATP.

It belongs to the adenylate kinase family. Monomer.

It is found in the cytoplasm. It carries out the reaction AMP + ATP = 2 ADP. Its pathway is purine metabolism; AMP biosynthesis via salvage pathway; AMP from ADP: step 1/1. Catalyzes the reversible transfer of the terminal phosphate group between ATP and AMP. Plays an important role in cellular energy homeostasis and in adenine nucleotide metabolism. In Polynucleobacter necessarius subsp. necessarius (strain STIR1), this protein is Adenylate kinase.